The sequence spans 169 residues: MVSSKGLWKERPSAHTSECFSTTACPVAFILLVWNSQTPAGLQSLCTGRHPSLSARAQRAGPRASREEGTFWTERVGQERWLIRSGSSQNESQEDQGAGLISQAGLKADNRRESSTWANEVEDRRPQCTPALNLTPSHPHPPHSLTTFLRSVIGIQIPPGLVAAGGTVA.

The disordered stretch occupies residues 82–140; that stretch reads LIRSGSSQNESQEDQGAGLISQAGLKADNRRESSTWANEVEDRRPQCTPALNLTPSHPH.

Belongs to the FAM231 family.

In Homo sapiens (Human), this protein is FAM231A/C-like protein LOC102723383.